Here is an 863-residue protein sequence, read N- to C-terminus: MSESHVKISRTIIRGTSPSTVRLESRVRELEDLLDLERDARVRAERNANEMSIQLDTMAERLDELSGTSSQTHDAIRRKDMEISKLRKDLENANAAFETAEATLRRKHNTMISEISSEVENLQKQKGRAEKDKSQLMLEIDNVLGQLDGALKAKASAESKLEGLDSQLTRLKALTDDLQRQMADANSAKSRLAAENFELVRVNQEYEAQVVTFSKTKAALESQLDDLKRAMDEDARNRLSLQTQLSSLQMDYDNLQARYEEEAEAAGNLRNQVAKFNADMAALKTRLERELMAKTEEFEELKRKLTVRITELEDMAEHERTRANNLEKTKVKLTLEIKDLQAENEALAAENGELTHRAKQAENLANELQRRIDEMTVEINTLNSANSALEADNMRLKGQVGDLTDRIANLDRENRQLGDQLKETKSALRDANRRLTDLEALRSQLEAERDNLASALHDAEEALKEMEAKYVASQNALNHLKSEMEQRLREKDEELENLRKSTTRTIEELTTTISEMEVRFKSDMSRLKKKYEATISELEVQLDVANKANVNLNRENKTLAQRVQELQAALEDERRAREAAESNLQVSERKRIALASEVEEIRSQLELSDRARKNAESELNDANGRISELTLSVNTLTNDKRRLEGDIGVMQGDLDEAVNARKAAEDRADRLNAEVLRLADELRQEQENYKRAETLRKQLEIEIREITVKLEEAEAFATREGRRMVQKLQNRVRELEAELDGEIRRAKEAFANARKYERQFKELQTQSEDDKRMILELQDLLDKTQIKMKAYKRQLEEQEEVSQLTMSKYRKAQQQIEEAEHRADMAERTITIKRTIGGPGSRAVSVVREINSVSRGNRATSIM.

A nonhelical region region spans residues 1–18 (MSESHVKISRTIIRGTSP). The stretch at 19–836 (STVRLESRVR…ERTITIKRTI (818 aa)) forms a coiled coil. The nonhelical region stretch occupies residues 837–863 (GGPGSRAVSVVREINSVSRGNRATSIM).

This sequence belongs to the paramyosin family. Homodimer or monomer in secreted form.

The protein localises to the cytoplasm. It localises to the myofibril. Its subcellular location is the secreted. Its function is as follows. Paramyosin is a major structural component of many thick filaments isolated from invertebrate muscles. It is a prominent antigen in human cysticercosis, may have a role as a modulator of the host immune response. It is able to bind collagen and has complement inhibitor activity. The protein is Paramyosin (PMY) of Taenia solium (Pork tapeworm).